Here is a 620-residue protein sequence, read N- to C-terminus: 1-deoxy-D-xylulose-5-phosphate synthase (620 aa).

Thiamine diphosphate-binding positions include His-80 and 121–123; that span reads GHS. Asp-152 serves as a coordination point for Mg(2+). Residues 153–154, Asn-181, Tyr-288, and Glu-370 each bind thiamine diphosphate; that span reads GA. Asn-181 is a binding site for Mg(2+).

It belongs to the transketolase family. DXPS subfamily. Homodimer. Mg(2+) is required as a cofactor. It depends on thiamine diphosphate as a cofactor.

The catalysed reaction is D-glyceraldehyde 3-phosphate + pyruvate + H(+) = 1-deoxy-D-xylulose 5-phosphate + CO2. It participates in metabolic intermediate biosynthesis; 1-deoxy-D-xylulose 5-phosphate biosynthesis; 1-deoxy-D-xylulose 5-phosphate from D-glyceraldehyde 3-phosphate and pyruvate: step 1/1. Its function is as follows. Catalyzes the acyloin condensation reaction between C atoms 2 and 3 of pyruvate and glyceraldehyde 3-phosphate to yield 1-deoxy-D-xylulose-5-phosphate (DXP). This Salmonella choleraesuis (strain SC-B67) protein is 1-deoxy-D-xylulose-5-phosphate synthase.